Consider the following 204-residue polypeptide: Secreted phosphoprotein 24 (204 aa).

A signal peptide spans 1–23 (MEKRAMRMLAMFVLGTSFWSCAG). Intrachain disulfides connect Cys86/Cys97 and Cys110/Cys128. Phosphoserine is present on Ser90. Phosphoserine occurs at positions 138, 139, 166, and 175. The disordered stretch occupies residues 179–204 (MRRFPPPGNRSFPNQWPRARTNTGFE).

Belongs to the SPP2 family. Multiply phosphorylated at serine residues. Post-translationally, phosphorylation sites are present in the extracellular medium.

It localises to the secreted. Functionally, could coordinate an aspect of bone turnover. The sequence is that of Secreted phosphoprotein 24 (SPP2) from Sus scrofa (Pig).